The sequence spans 84 residues: Small ribosomal subunit protein bS18 (84 aa).

This sequence belongs to the bacterial ribosomal protein bS18 family. In terms of assembly, part of the 30S ribosomal subunit. Forms a tight heterodimer with protein bS6.

Binds as a heterodimer with protein bS6 to the central domain of the 16S rRNA, where it helps stabilize the platform of the 30S subunit. The chain is Small ribosomal subunit protein bS18 from Ruthia magnifica subsp. Calyptogena magnifica.